A 574-amino-acid polypeptide reads, in one-letter code: Tyrosinase (574 aa).

Cu cation-binding residues include H67, H95, H104, H275, H279, and H304. The 2'-(S-cysteinyl)-histidine (Cys-His) cross-link spans 93-95 (CTH).

This sequence belongs to the tyrosinase family. Cu(2+) serves as cofactor.

The catalysed reaction is 2 L-dopa + O2 = 2 L-dopaquinone + 2 H2O. The enzyme catalyses L-tyrosine + O2 = L-dopaquinone + H2O. In terms of biological role, this is a copper-containing oxidase that functions in the formation of pigments such as melanins and other polyphenolic compounds. In Podospora anserina (Pleurage anserina), this protein is Tyrosinase (TYR).